A 342-amino-acid polypeptide reads, in one-letter code: Ketol-acid reductoisomerase (NADP(+)) (342 aa).

The 180-residue stretch at 2–181 folds into the KARI N-terminal Rossmann domain; the sequence is VKVYYNGDIQ…GGARAGVLET (180 aa). Residues 25–28, R48, S52, and 82–85 contribute to the NADP(+) site; these read YGSQ and DEQQ. Residue H107 is part of the active site. G133 contributes to the NADP(+) binding site. Residues 182–327 form the KARI C-terminal knotted domain; sequence TFKEETETDL…RKLREMMPFV (146 aa). 4 residues coordinate Mg(2+): D190, E194, E226, and E230. Residue S251 coordinates substrate.

Belongs to the ketol-acid reductoisomerase family. Mg(2+) serves as cofactor.

The enzyme catalyses (2R)-2,3-dihydroxy-3-methylbutanoate + NADP(+) = (2S)-2-acetolactate + NADPH + H(+). The catalysed reaction is (2R,3R)-2,3-dihydroxy-3-methylpentanoate + NADP(+) = (S)-2-ethyl-2-hydroxy-3-oxobutanoate + NADPH + H(+). It participates in amino-acid biosynthesis; L-isoleucine biosynthesis; L-isoleucine from 2-oxobutanoate: step 2/4. Its pathway is amino-acid biosynthesis; L-valine biosynthesis; L-valine from pyruvate: step 2/4. In terms of biological role, involved in the biosynthesis of branched-chain amino acids (BCAA). Catalyzes an alkyl-migration followed by a ketol-acid reduction of (S)-2-acetolactate (S2AL) to yield (R)-2,3-dihydroxy-isovalerate. In the isomerase reaction, S2AL is rearranged via a Mg-dependent methyl migration to produce 3-hydroxy-3-methyl-2-ketobutyrate (HMKB). In the reductase reaction, this 2-ketoacid undergoes a metal-dependent reduction by NADPH to yield (R)-2,3-dihydroxy-isovalerate. This Bacillus pumilus (strain SAFR-032) protein is Ketol-acid reductoisomerase (NADP(+)).